The sequence spans 177 residues: Large ribosomal subunit protein uL5 (177 aa).

Belongs to the universal ribosomal protein uL5 family. Part of the 50S ribosomal subunit; part of the 5S rRNA/L5/L18/L25 subcomplex. Contacts the 5S rRNA and the P site tRNA. Forms a bridge to the 30S subunit in the 70S ribosome.

This is one of the proteins that bind and probably mediate the attachment of the 5S RNA into the large ribosomal subunit, where it forms part of the central protuberance. In the 70S ribosome it contacts protein S13 of the 30S subunit (bridge B1b), connecting the 2 subunits; this bridge is implicated in subunit movement. Contacts the P site tRNA; the 5S rRNA and some of its associated proteins might help stabilize positioning of ribosome-bound tRNAs. The sequence is that of Large ribosomal subunit protein uL5 from Wolbachia pipientis wMel.